The sequence spans 741 residues: Transketolase, chloroplastic (741 aa).

Residues 1 to 67 (MASSSSLTLS…TKQQFSVRAS (67 aa)) constitute a chloroplast transit peptide. A substrate-binding site is contributed by His-103. Thiamine diphosphate-binding positions include His-143 and 192–194 (GPL). Mg(2+) is bound at residue Asp-233. Thiamine diphosphate contacts are provided by Gly-234 and Asn-263. Mg(2+)-binding residues include Asn-263 and Ile-265. The substrate site is built by His-340, Arg-434, and Ser-461. His-340 lines the thiamine diphosphate pocket. Thiamine diphosphate is bound by residues Glu-488 and Phe-515. The active-site Proton donor is the Glu-488. Substrate-binding residues include His-539, Asp-547, and Arg-598.

Belongs to the transketolase family. As to quaternary structure, homodimer. The cofactor is Mg(2+). Ca(2+) is required as a cofactor. Requires Mn(2+) as cofactor. Co(2+) serves as cofactor. It depends on thiamine diphosphate as a cofactor.

The protein resides in the plastid. The protein localises to the chloroplast thylakoid membrane. The catalysed reaction is D-sedoheptulose 7-phosphate + D-glyceraldehyde 3-phosphate = aldehydo-D-ribose 5-phosphate + D-xylulose 5-phosphate. It functions in the pathway carbohydrate biosynthesis; Calvin cycle. Its function is as follows. Catalyzes the reversible transfer of a two-carbon ketol group from fructose-6-phosphate or sedoheptulose-7-phosphate to glyceraldehyde-3-phosphate to yield xylulose-5-phosphate and erythrose-4-phosphate or ribose-5-phosphate, respectively. In Solanum tuberosum (Potato), this protein is Transketolase, chloroplastic.